We begin with the raw amino-acid sequence, 396 residues long: MEKNQNPNTWSDLPLDLLNLVFKRLSFANFRQAKSVCSSWYSASKQSVPKNQIPWLMLFPKDKNNNKNSSCTIFFNPEDKDQLYQTQDLGVEFAKSVCLATYGSWLLMQDSKYNLYILNPFTYEKIGLPAIESQQVGMVKVDQTIDDDFLTFDDHNHVKLFKGNNTVRTPVFWIDEKTKEYIALWGLGYWCVVYAKNGDKLWNQIPEIILDSLDMVYKDHKLYSFSYRNLFTILDFSGEIPRKAFQCFMHVYRSEWLSPRSRQLSNSWCVAETKLVVTVTGDVLLVERMLRHWSRIQSFNVYKFYSSGTFLDKYELADSLGDEAMLLDLGITVLANEVEGLHRNTIYFSDSHDTTTKDLFLFNYETREMEPLHKFDFDCSLLELSARWFLPSFSHT.

The F-box domain occupies 7–58 (PNTWSDLPLDLLNLVFKRLSFANFRQAKSVCSSWYSASKQSVPKNQIPWLML).

The sequence is that of Putative F-box protein At4g22660 from Arabidopsis thaliana (Mouse-ear cress).